Here is a 148-residue protein sequence, read N- to C-terminus: UPF0260 protein ECA2365 (148 aa).

This sequence belongs to the UPF0260 family.

In Pectobacterium atrosepticum (strain SCRI 1043 / ATCC BAA-672) (Erwinia carotovora subsp. atroseptica), this protein is UPF0260 protein ECA2365.